We begin with the raw amino-acid sequence, 162 residues long: Large ribosomal subunit protein uL15 (162 aa).

Positions 1 to 41 are disordered; the sequence is MKLSDIADNAGSRKKRMRVGRGIGSGKGKTAGRGGKGQTAR. The segment covering 21–37 has biased composition (gly residues); it reads RGIGSGKGKTAGRGGKG.

Belongs to the universal ribosomal protein uL15 family. Part of the 50S ribosomal subunit.

Binds to the 23S rRNA. This is Large ribosomal subunit protein uL15 from Rhodopseudomonas palustris (strain BisB18).